Here is a 164-residue protein sequence, read N- to C-terminus: Terminase, small subunit (164 aa).

The tract at residues 1 to 35 (MEGLDINKLLDISDLPGIDGEEIKVYEPLQLVEVK) is helix-turn-helix (HTH). The segment at 1–35 (MEGLDINKLLDISDLPGIDGEEIKVYEPLQLVEVK) is interaction with gp17. The oligomerization stretch occupies residues 36 to 114 (SNPQNRTPDL…KDMKDITSEQ (79 aa)). The tract at residues 115–164 (VGTKGAVPTGQMNIQNATVFMGSPTELMDEIGDAYEAQEAREKVINGTTD) is interaction with gp17.

As to quaternary structure, homooctamer. Interacts with the terminase large subunit gp17; the active complex is probably heterooligomeric.

Functionally, the terminase small subunit binds to the packaging initiation site and regulates the ATPase activity of the terminase large subunit. The terminase lies at a unique vertex of the procapsid and is composed of two subunits, a small terminase subunit involved in viral DNA recognition (packaging 'pac' sequence), and a large terminase subunit possessing endonucleolytic and ATPase activities. Both terminase subunits heterooligomerize and are docked on the portal protein to form the packaging machine. The terminase large subunit exhibits endonuclease activity and cleaves the viral genome concatemer once the capsid is full (headful packaging). Once the capsid is packaged with the DNA, the terminase complex is substituted by neck proteins. The polypeptide is Terminase, small subunit (16) (Enterobacteria phage T4 (Bacteriophage T4)).